A 447-amino-acid polypeptide reads, in one-letter code: Argininosuccinate synthase (447 aa).

Residues Ala-20 to Ser-28 and Ala-46 each bind ATP. L-citrulline is bound at residue Tyr-102. Residues Gly-132 and Thr-134 each contribute to the ATP site. Positions 134, 138, and 139 each coordinate L-aspartate. Asn-138 provides a ligand contact to L-citrulline. Asp-139 is a binding site for ATP. 2 residues coordinate L-citrulline: Arg-142 and Ser-195. Residue Asp-197 participates in ATP binding. L-citrulline is bound by residues Thr-204, Glu-206, and Glu-283.

It belongs to the argininosuccinate synthase family. Type 2 subfamily. Homotetramer.

It is found in the cytoplasm. The catalysed reaction is L-citrulline + L-aspartate + ATP = 2-(N(omega)-L-arginino)succinate + AMP + diphosphate + H(+). It participates in amino-acid biosynthesis; L-arginine biosynthesis; L-arginine from L-ornithine and carbamoyl phosphate: step 2/3. The chain is Argininosuccinate synthase (argG) from Neisseria meningitidis serogroup B (strain ATCC BAA-335 / MC58).